The following is a 55-amino-acid chain: Photosystem I reaction center subunit IX (55 aa).

A helical membrane pass occupies residues 7–27 (YLSVAPVLSTLWFGSLAGLLI).

Belongs to the PsaJ family.

The protein localises to the plastid. Its subcellular location is the chloroplast thylakoid membrane. Functionally, may help in the organization of the PsaE and PsaF subunits. This is Photosystem I reaction center subunit IX from Gossypium barbadense (Sea Island cotton).